An 87-amino-acid chain; its full sequence is Serine rich endogenous peptide 17 (87 aa).

Positions 1-28 are cleaved as a signal peptide; it reads MTGKAPFFVILIAALLLLSSFFFGEVKA. Positions 32–87 are disordered; sequence KQPKHRKLGNREGDENRSNEIVVQMKARVKRSKSKRGPQKKEPYKKPPCSPPTHPA. Over residues 40 to 49 the composition is skewed to basic and acidic residues; it reads GNREGDENRS. Residues 51 to 71 carry the SCOOP motif motif; the sequence is EIVVQMKARVKRSKSKRGPQK. Basic residues predominate over residues 58 to 69; the sequence is ARVKRSKSKRGP. The SxS motif essential for MIK2 binding motif lies at 63–65; it reads SKS. Pro residues predominate over residues 77–87; it reads KPPCSPPTHPA.

This sequence belongs to the serine rich endogenous peptide (SCOOP) phytocytokine family. Interacts with MIK2 (via extracellular leucine-rich repeat domain); this interaction triggers the formation of complex between MIK2 and the BAK1/SERK3 and SERK4 coreceptors, and subsequent BAK1 activation by phosphorylation.

The protein localises to the cell membrane. It localises to the secreted. The protein resides in the extracellular space. It is found in the apoplast. Functionally, brassicaceae-specific phytocytokine (plant endogenous peptide released into the apoplast) perceived by MIK2 in a BAK1/SERK3 and SERK4 coreceptors-dependent manner, that modulates various physiological and antimicrobial processes including growth prevention and reactive oxygen species (ROS) response regulation. The polypeptide is Serine rich endogenous peptide 17 (Arabidopsis thaliana (Mouse-ear cress)).